Consider the following 345-residue polypeptide: Phenylalanine--tRNA ligase alpha subunit (345 aa).

Glu253 lines the Mg(2+) pocket.

This sequence belongs to the class-II aminoacyl-tRNA synthetase family. Phe-tRNA synthetase alpha subunit type 1 subfamily. In terms of assembly, tetramer of two alpha and two beta subunits. It depends on Mg(2+) as a cofactor.

It is found in the cytoplasm. The catalysed reaction is tRNA(Phe) + L-phenylalanine + ATP = L-phenylalanyl-tRNA(Phe) + AMP + diphosphate + H(+). In Nitratidesulfovibrio vulgaris (strain DSM 19637 / Miyazaki F) (Desulfovibrio vulgaris), this protein is Phenylalanine--tRNA ligase alpha subunit.